The sequence spans 471 residues: Ribulose bisphosphate carboxylase large chain (471 aa).

Lys5 is modified (N6,N6,N6-trimethyllysine). The substrate site is built by Asn114 and Thr164. Lys166 (proton acceptor) is an active-site residue. Lys168 contacts substrate. Mg(2+) is bound by residues Lys192, Asp194, and Glu195. Residue Lys192 is modified to N6-carboxylysine. The Proton acceptor role is filled by His285. 3 residues coordinate substrate: Arg286, His318, and Ser370.

Belongs to the RuBisCO large chain family. Type I subfamily. Heterohexadecamer of 8 large chains and 8 small chains; disulfide-linked. The disulfide link is formed within the large subunit homodimers. It depends on Mg(2+) as a cofactor. In terms of processing, the disulfide bond which can form in the large chain dimeric partners within the hexadecamer appears to be associated with oxidative stress and protein turnover.

The protein resides in the plastid. It is found in the chloroplast. It catalyses the reaction 2 (2R)-3-phosphoglycerate + 2 H(+) = D-ribulose 1,5-bisphosphate + CO2 + H2O. The enzyme catalyses D-ribulose 1,5-bisphosphate + O2 = 2-phosphoglycolate + (2R)-3-phosphoglycerate + 2 H(+). RuBisCO catalyzes two reactions: the carboxylation of D-ribulose 1,5-bisphosphate, the primary event in carbon dioxide fixation, as well as the oxidative fragmentation of the pentose substrate in the photorespiration process. Both reactions occur simultaneously and in competition at the same active site. This is Ribulose bisphosphate carboxylase large chain from Schlumbergera truncata (Thanksgiving cactus).